A 423-amino-acid polypeptide reads, in one-letter code: Gamma-glutamyl phosphate reductase (423 aa).

It belongs to the gamma-glutamyl phosphate reductase family.

It localises to the cytoplasm. It carries out the reaction L-glutamate 5-semialdehyde + phosphate + NADP(+) = L-glutamyl 5-phosphate + NADPH + H(+). The protein operates within amino-acid biosynthesis; L-proline biosynthesis; L-glutamate 5-semialdehyde from L-glutamate: step 2/2. Catalyzes the NADPH-dependent reduction of L-glutamate 5-phosphate into L-glutamate 5-semialdehyde and phosphate. The product spontaneously undergoes cyclization to form 1-pyrroline-5-carboxylate. This chain is Gamma-glutamyl phosphate reductase, found in Pseudomonas fluorescens (strain Pf0-1).